Here is a 184-residue protein sequence, read N- to C-terminus: Ribosome-recycling factor (184 aa).

Positions 133–162 are enriched in basic and acidic residues; sequence RDGMDNLKQDENKKEISEDERKRHETEVQK. Residues 133–163 are disordered; sequence RDGMDNLKQDENKKEISEDERKRHETEVQKL.

This sequence belongs to the RRF family.

The protein localises to the cytoplasm. In terms of biological role, responsible for the release of ribosomes from messenger RNA at the termination of protein biosynthesis. May increase the efficiency of translation by recycling ribosomes from one round of translation to another. The protein is Ribosome-recycling factor of Sphingopyxis alaskensis (strain DSM 13593 / LMG 18877 / RB2256) (Sphingomonas alaskensis).